The following is a 229-amino-acid chain: Phosphoglycolate phosphatase (229 aa).

Residue Asp-13 is the Nucleophile of the active site. Positions 13, 15, and 178 each coordinate Mg(2+).

This sequence belongs to the HAD-like hydrolase superfamily. CbbY/CbbZ/Gph/YieH family. The cofactor is Mg(2+).

It carries out the reaction 2-phosphoglycolate + H2O = glycolate + phosphate. Its pathway is organic acid metabolism; glycolate biosynthesis; glycolate from 2-phosphoglycolate: step 1/1. Functionally, specifically catalyzes the dephosphorylation of 2-phosphoglycolate. Is involved in the dissimilation of the intracellular 2-phosphoglycolate formed during the DNA repair of 3'-phosphoglycolate ends, a major class of DNA lesions induced by oxidative stress. The sequence is that of Phosphoglycolate phosphatase from Photobacterium profundum (strain SS9).